Here is a 131-residue protein sequence, read N- to C-terminus: Ribonuclease VapC4 (131 aa).

The region spanning I4–K106 is the PINc domain. Mg(2+) is bound by residues D7 and D102.

This sequence belongs to the PINc/VapC protein family. The cofactor is Mg(2+).

In terms of biological role, toxic component of a type II toxin-antitoxin (TA) system. An RNase. Its cognate antitoxin is VapB4. The sequence is that of Ribonuclease VapC4 from Methanocaldococcus jannaschii (strain ATCC 43067 / DSM 2661 / JAL-1 / JCM 10045 / NBRC 100440) (Methanococcus jannaschii).